The sequence spans 426 residues: Trigger factor 1 (426 aa).

Residues 163–248 (QDTVNIDFAG…VNKLKRKEYA (86 aa)) form the PPIase FKBP-type domain.

The protein belongs to the FKBP-type PPIase family. Tig subfamily.

It is found in the cytoplasm. The enzyme catalyses [protein]-peptidylproline (omega=180) = [protein]-peptidylproline (omega=0). Its function is as follows. Involved in protein export. Acts as a chaperone by maintaining the newly synthesized protein in an open conformation. Functions as a peptidyl-prolyl cis-trans isomerase. The polypeptide is Trigger factor 1 (Desulfitobacterium hafniense (strain Y51)).